A 570-amino-acid polypeptide reads, in one-letter code: Sulfite reductase [NADPH] hemoprotein beta-component (570 aa).

4 residues coordinate [4Fe-4S] cluster: Cys433, Cys439, Cys478, and Cys482. Siroheme is bound at residue Cys482.

The protein belongs to the nitrite and sulfite reductase 4Fe-4S domain family. Alpha(8)-beta(8). The alpha component is a flavoprotein, the beta component is a hemoprotein. The cofactor is siroheme. [4Fe-4S] cluster is required as a cofactor.

The enzyme catalyses hydrogen sulfide + 3 NADP(+) + 3 H2O = sulfite + 3 NADPH + 4 H(+). Its pathway is sulfur metabolism; hydrogen sulfide biosynthesis; hydrogen sulfide from sulfite (NADPH route): step 1/1. Its function is as follows. Component of the sulfite reductase complex that catalyzes the 6-electron reduction of sulfite to sulfide. This is one of several activities required for the biosynthesis of L-cysteine from sulfate. The polypeptide is Sulfite reductase [NADPH] hemoprotein beta-component (Aeromonas hydrophila subsp. hydrophila (strain ATCC 7966 / DSM 30187 / BCRC 13018 / CCUG 14551 / JCM 1027 / KCTC 2358 / NCIMB 9240 / NCTC 8049)).